A 149-amino-acid chain; its full sequence is Calmodulin-2 (149 aa).

The residue at position 2 (Ala2) is an N-acetylalanine. EF-hand domains lie at 8-43 (EQIA…LGQN), 44-79 (PTEG…KMKD), 81-116 (DSEE…PGEK), and 117-149 (LTDE…MTSK). Ca(2+) contacts are provided by Asp21, Asp23, Asn25, Asn27, Glu32, Asp57, Asp59, Asn61, Thr63, Glu68, Asp94, Asp96, Asn98, and Glu105. Lys116 is subject to N6,N6,N6-trimethyllysine. Positions 130, 132, 134, 136, and 141 each coordinate Ca(2+).

It belongs to the calmodulin family.

In terms of biological role, calmodulin mediates the control of a large number of enzymes, ion channels and other proteins by Ca(2+). Among the enzymes to be stimulated by the calmodulin-Ca(2+) complex are a number of protein kinases and phosphatases. In Branchiostoma floridae (Florida lancelet), this protein is Calmodulin-2 (CAM2).